The primary structure comprises 769 residues: 5-methyltetrahydropteroyltriglutamate--homocysteine methyltransferase (769 aa).

5-methyltetrahydropteroyltri-L-glutamate-binding positions include 16–19 (RELK) and lysine 121. Residues 415 to 450 (SMTERDSPHSSRSPLQREALDLPTLPTTTIGSFPQT) are disordered. The segment covering 439-449 (LPTTTIGSFPQ) has biased composition (polar residues). Residues 444 to 446 (IGS) and glutamate 497 contribute to the L-homocysteine site. Residues 444 to 446 (IGS) and glutamate 497 each bind L-methionine. 5-methyltetrahydropteroyltri-L-glutamate contacts are provided by residues 528–529 (RC) and tryptophan 574. Residue aspartate 612 participates in L-homocysteine binding. Aspartate 612 is a binding site for L-methionine. Position 618 (glutamate 618) interacts with 5-methyltetrahydropteroyltri-L-glutamate. Residues histidine 654, cysteine 656, and glutamate 678 each coordinate Zn(2+). Histidine 707 serves as the catalytic Proton donor. Position 739 (cysteine 739) interacts with Zn(2+).

It belongs to the vitamin-B12 independent methionine synthase family. It depends on Zn(2+) as a cofactor.

The catalysed reaction is 5-methyltetrahydropteroyltri-L-glutamate + L-homocysteine = tetrahydropteroyltri-L-glutamate + L-methionine. It participates in amino-acid biosynthesis; L-methionine biosynthesis via de novo pathway; L-methionine from L-homocysteine (MetE route): step 1/1. Catalyzes the transfer of a methyl group from 5-methyltetrahydrofolate to homocysteine resulting in methionine formation. This chain is 5-methyltetrahydropteroyltriglutamate--homocysteine methyltransferase, found in Salinibacter ruber (strain DSM 13855 / M31).